We begin with the raw amino-acid sequence, 588 residues long: L-fucose isomerase (588 aa).

Residues Glu-335 and Asp-359 each act as proton acceptor in the active site. Positions 335, 359, and 525 each coordinate Mn(2+).

Belongs to the L-fucose isomerase family. Mn(2+) is required as a cofactor.

It localises to the cytoplasm. It carries out the reaction L-fucose = L-fuculose. The protein operates within carbohydrate degradation; L-fucose degradation; L-lactaldehyde and glycerone phosphate from L-fucose: step 1/3. In terms of biological role, converts the aldose L-fucose into the corresponding ketose L-fuculose. The chain is L-fucose isomerase from Streptococcus pneumoniae (strain Hungary19A-6).